The primary structure comprises 805 residues: Leucine--tRNA ligase (805 aa).

Positions 40 to 51 (PYPSGSGLHVGH) match the 'HIGH' region motif. The 'KMSKS' region motif lies at 576-580 (KMSKS). Position 579 (Lys579) interacts with ATP.

The protein belongs to the class-I aminoacyl-tRNA synthetase family.

It localises to the cytoplasm. It catalyses the reaction tRNA(Leu) + L-leucine + ATP = L-leucyl-tRNA(Leu) + AMP + diphosphate. In Chlorobium luteolum (strain DSM 273 / BCRC 81028 / 2530) (Pelodictyon luteolum), this protein is Leucine--tRNA ligase.